We begin with the raw amino-acid sequence, 308 residues long: UDP-N-acetylenolpyruvoylglucosamine reductase (308 aa).

In terms of domain architecture, FAD-binding PCMH-type spans 37–201 (RVGGPAQVLF…TQATFRGTPG (165 aa)). The active site involves Arg-181. The span at 216–233 (SREATQPIKSRTGGSTFK) shows a compositional bias: polar residues. Residues 216-236 (SREATQPIKSRTGGSTFKNPP) are disordered. Ser-230 (proton donor) is an active-site residue. Glu-300 is an active-site residue.

Belongs to the MurB family. It depends on FAD as a cofactor.

Its subcellular location is the cytoplasm. It catalyses the reaction UDP-N-acetyl-alpha-D-muramate + NADP(+) = UDP-N-acetyl-3-O-(1-carboxyvinyl)-alpha-D-glucosamine + NADPH + H(+). The protein operates within cell wall biogenesis; peptidoglycan biosynthesis. In terms of biological role, cell wall formation. This chain is UDP-N-acetylenolpyruvoylglucosamine reductase, found in Azorhizobium caulinodans (strain ATCC 43989 / DSM 5975 / JCM 20966 / LMG 6465 / NBRC 14845 / NCIMB 13405 / ORS 571).